The following is a 288-amino-acid chain: Proteasome assembly chaperone 1 (288 aa).

Alanine 2 carries the N-acetylalanine modification. The segment at 12 to 38 (TPCRAGTEEEEEEEDGNRETPEDREVR) is disordered. The residue at position 18 (threonine 18) is a Phosphothreonine. The segment covering 28–38 (NRETPEDREVR) has biased composition (basic and acidic residues). Threonine 54 is modified (phosphothreonine). Serine 180 carries the post-translational modification Phosphoserine. The residue at position 264 (lysine 264) is an N6-acetyllysine.

This sequence belongs to the PSMG1 family. Forms a heterodimer with PSMG2. The PSMG1-PSMG2 heterodimer interacts directly with the PSMA5 and PSMA7 proteasome alpha subunits. In terms of processing, degraded by the proteasome upon completion of 20S proteasome maturation.

It localises to the cytoplasm. Its subcellular location is the endoplasmic reticulum. Chaperone protein which promotes assembly of the 20S proteasome as part of a heterodimer with PSMG2. The PSMG1-PSMG2 heterodimer binds to the PSMA5 and PSMA7 proteasome subunits, promotes assembly of the proteasome alpha subunits into the heteroheptameric alpha ring and prevents alpha ring dimerization. This is Proteasome assembly chaperone 1 from Bos taurus (Bovine).